Consider the following 244-residue polypeptide: Orotidine 5'-phosphate decarboxylase (244 aa).

Substrate-binding positions include Asp-12, Lys-34, 61–70, Thr-125, Arg-187, Gln-196, Gly-216, and Arg-217; that span reads DLKLFDIPNT. Lys-63 (proton donor) is an active-site residue.

It belongs to the OMP decarboxylase family. Type 1 subfamily. Homodimer.

The catalysed reaction is orotidine 5'-phosphate + H(+) = UMP + CO2. It functions in the pathway pyrimidine metabolism; UMP biosynthesis via de novo pathway; UMP from orotate: step 2/2. In terms of biological role, catalyzes the decarboxylation of orotidine 5'-monophosphate (OMP) to uridine 5'-monophosphate (UMP). The polypeptide is Orotidine 5'-phosphate decarboxylase (Dictyoglomus thermophilum (strain ATCC 35947 / DSM 3960 / H-6-12)).